The following is a 124-amino-acid chain: MRHYEIVFIVHPDQSEQVPAMIERYKSTITSHGGQIHRVEDWGRRQLAYMIEKLAKAHYVCMNIECDQTTLDELEHAFKFNDAVLRHLIVKMKKAETGPSPMMKEVQREEAKKAAAAQPTEAQA.

The tract at residues 96-124 is disordered; that stretch reads ETGPSPMMKEVQREEAKKAAAAQPTEAQA. A compositionally biased stretch (low complexity) spans 114–124; it reads AAAAQPTEAQA.

The protein belongs to the bacterial ribosomal protein bS6 family.

Functionally, binds together with bS18 to 16S ribosomal RNA. The polypeptide is Small ribosomal subunit protein bS6 (Burkholderia mallei (strain ATCC 23344)).